Reading from the N-terminus, the 111-residue chain is Disintegrin acostatin-alpha (111 aa).

An N-terminal signal peptide occupies residues 1 to 20; it reads MIQVLLVTLCLAVFPYQGSS. Residues 21–46 constitute a propeptide that is removed on maturation; the sequence is IILESGNVNDYEVVYPRKVTALPKGA. In terms of domain architecture, Disintegrin spans 47–111; it reads IQPKNPCCDA…GDCPRKHFYA (65 aa). The residue at position 48 (glutamine 48) is a Pyrrolidone carboxylic acid; in Disintegrin acostatin-alpha, processed form. 4 disulfides stabilise this stretch: cysteine 53–cysteine 76, cysteine 67–cysteine 73, cysteine 72–cysteine 97, and cysteine 85–cysteine 104. Positions 89–91 match the Cell attachment site motif; that stretch reads RGD. Residues 110–111 constitute a propeptide that is removed on maturation; it reads YA.

It belongs to the disintegrin family. Dimeric disintegrin subfamily. In terms of assembly, heterodimer with subunit beta; disulfide-linked. In terms of tissue distribution, expressed by the venom gland.

It is found in the secreted. Functionally, inhibits fibrinogen interaction with platelets. Acts by binding to alpha-IIb/beta-3 (ITGA2B/ITGB3) on the platelet surface and inhibits ADP-induced platelet aggregation in human platelet-rich plasma. The sequence is that of Disintegrin acostatin-alpha from Agkistrodon contortrix contortrix (Southern copperhead).